The following is a 143-amino-acid chain: Small ribosomal subunit protein eS6 (143 aa).

The protein belongs to the eukaryotic ribosomal protein eS6 family.

The chain is Small ribosomal subunit protein eS6 from Methanoregula boonei (strain DSM 21154 / JCM 14090 / 6A8).